We begin with the raw amino-acid sequence, 227 residues long: 2,3-bisphosphoglycerate-dependent phosphoglycerate mutase (227 aa).

Substrate contacts are provided by residues 7-14 (RHGFSEWN), 20-21 (TG), R59, 86-89 (ERHY), K97, 113-114 (RR), and 182-183 (GN). H8 (tele-phosphohistidine intermediate) is an active-site residue. E86 (proton donor/acceptor) is an active-site residue.

The protein belongs to the phosphoglycerate mutase family. BPG-dependent PGAM subfamily. Homodimer.

It carries out the reaction (2R)-2-phosphoglycerate = (2R)-3-phosphoglycerate. Its pathway is carbohydrate degradation; glycolysis; pyruvate from D-glyceraldehyde 3-phosphate: step 3/5. Functionally, catalyzes the interconversion of 2-phosphoglycerate and 3-phosphoglycerate. The protein is 2,3-bisphosphoglycerate-dependent phosphoglycerate mutase of Haemophilus influenzae (strain ATCC 51907 / DSM 11121 / KW20 / Rd).